The primary structure comprises 674 residues: Sodium/myo-inositol cotransporter 2 (674 aa).

At 1 to 25 (MESSASSPPLTQSDPLEAFPRRTLE) the chain is on the extracellular side. Residues 26–46 (AGDIAVLVLYFLFVLAVGLWS) traverse the membrane as a helical segment. The Cytoplasmic portion of the chain corresponds to 47–56 (TVKTKRDTVK). Residues 57 to 77 (GYFLAGGNMLWWPVGASLFAS) traverse the membrane as a helical segment. The Extracellular portion of the chain corresponds to 78-102 (NVGSGHFVGLAGSGAAAGLSVTAYE). A helical transmembrane segment spans residues 103–123 (LNGLFFVLMLSWIFLPIYITG). Topologically, residues 124 to 140 (QVTTMPEYLRKRFGGNR) are cytoplasmic. The helical transmembrane segment at 141–161 (IPIILAVLYLFIYIFTKISVD) threads the bilayer. Residues 162–180 (MYAGAIFIQQSLHVNLYLA) lie on the Extracellular side of the membrane. The helical transmembrane segment at 181-201 (IVGLLAVTALYTIAGGLAAVI) threads the bilayer. Residues 202–208 (YTDALQT) lie on the Cytoplasmic side of the membrane. Residues 209 to 229 (LIMLIGALILMGYSFAAVGGL) traverse the membrane as a helical segment. The Extracellular portion of the chain corresponds to 230–272 (EGLEEKYFLAMASNRSGNSSCGLPREDAFHIFRDPVTSDLPWP). Residues 273–293 (GILFGMSIPSLWYWCTDQVIV) traverse the membrane as a helical segment. At 294–308 (QRTLAAKNLSHAKGG) the chain is on the cytoplasmic side. A helical transmembrane segment spans residues 309-329 (SLMAAYLKVLPLFIMVFPGMV). Topologically, residues 330–374 (SRVLFPDEVACADPEICRKVCSNPAGCSDIAYPKLVLELLPTGLR) are extracellular. Residues 375-397 (GLMMAVMVAALTSSLTSIFNSAS) traverse the membrane as a helical segment. Topologically, residues 398-418 (TIFTMDLWNHLRPRASEKELM) are cytoplasmic. The helical transmembrane segment at 419 to 439 (IVGRVFVLLLVLVSILWIPVV) threads the bilayer. The Extracellular segment spans residues 440–446 (QASQGGQ). Residues 447–467 (LFIYIQSISSYLQPPVAVVFI) form a helical membrane-spanning segment. Topologically, residues 468 to 479 (MGCFWKRANEKG) are cytoplasmic. A helical transmembrane segment spans residues 480–500 (AFFGLVLGLLLGLVRLILDFI). The Extracellular segment spans residues 501 to 521 (YVQPRCDQLDERPAVVKDVHY). A helical transmembrane segment spans residues 522–542 (LYFSMILSSVTLITVCAVSWF). Residues 543–653 (TEPPSKEMVS…SLEENPLVKT (111 aa)) are Cytoplasmic-facing. A disordered region spans residues 567 to 589 (EQVPSATPPPLTLSQNGTPEASG). Polar residues predominate over residues 578–589 (TLSQNGTPEASG). Residues 654–674 (LLDLNLIICISCAIFLWGYFA) form a helical membrane-spanning segment.

It belongs to the sodium:solute symporter (SSF) (TC 2.A.21) family.

It is found in the membrane. Its subcellular location is the apical cell membrane. It carries out the reaction myo-inositol(out) + 2 Na(+)(out) = myo-inositol(in) + 2 Na(+)(in). The enzyme catalyses 1D-chiro-inositol(out) + 2 Na(+)(out) = 1D-chiro-inositol(in) + 2 Na(+)(in). The catalysed reaction is D-glucose(out) + 2 Na(+)(out) = D-glucose(in) + 2 Na(+)(in). It catalyses the reaction D-xylose(out) + 2 Na(+)(out) = D-xylose(in) + 2 Na(+)(in). MI transport activity inhibited by D-chiro-inositol (DCI), phlorizin (Pz) and sodium (Na(+)). Insulin increases D-chiro-inositol uptake. Its function is as follows. Involved in the sodium-dependent cotransport of myo-inositol (MI) with a Na(+):MI stoichiometry of 2:1. Exclusively responsible for apical MI transport and absorption in intestine. Can also transport D-chiro-inositol (DCI) but not L-fucose. Exhibits stereospecific cotransport of both D-glucose and D-xylose. May induce apoptosis through the TNF-alpha, PDCD1 pathway. May play a role in the regulation of MI concentration in serum, involving reabsorption in at least the proximal tubule of the kidney. In Bos taurus (Bovine), this protein is Sodium/myo-inositol cotransporter 2.